A 260-amino-acid chain; its full sequence is Acetyl-coenzyme A carboxylase carboxyl transferase subunit alpha (260 aa).

The region spanning 1–235 (MSAYDKVMAA…SNKILHSINK (235 aa)) is the CoA carboxyltransferase C-terminal domain.

Belongs to the AccA family. As to quaternary structure, acetyl-CoA carboxylase is a heterohexamer composed of biotin carboxyl carrier protein (AccB), biotin carboxylase (AccC) and two subunits each of ACCase subunit alpha (AccA) and ACCase subunit beta (AccD).

Its subcellular location is the cytoplasm. The catalysed reaction is N(6)-carboxybiotinyl-L-lysyl-[protein] + acetyl-CoA = N(6)-biotinyl-L-lysyl-[protein] + malonyl-CoA. It participates in lipid metabolism; malonyl-CoA biosynthesis; malonyl-CoA from acetyl-CoA: step 1/1. In terms of biological role, component of the acetyl coenzyme A carboxylase (ACC) complex. First, biotin carboxylase catalyzes the carboxylation of biotin on its carrier protein (BCCP) and then the CO(2) group is transferred by the carboxyltransferase to acetyl-CoA to form malonyl-CoA. This chain is Acetyl-coenzyme A carboxylase carboxyl transferase subunit alpha, found in Ruminiclostridium cellulolyticum (strain ATCC 35319 / DSM 5812 / JCM 6584 / H10) (Clostridium cellulolyticum).